Consider the following 599-residue polypeptide: Sulfite reductase [NADPH] flavoprotein alpha-component (599 aa).

Residues 64–202 (ITIISASQTG…AASEWRARVV (139 aa)) form the Flavodoxin-like domain. Residues 70–75 (SQTGNA), 117–120 (STQG), and 153–162 (LGDSSYEFFC) each bind FMN. The FAD-binding FR-type domain occupies 234–448 (DAPLVASLSV…IEHNDNFRLP (215 aa)). FAD is bound by residues threonine 322, alanine 356, 386-389 (RLYS), 404-406 (TVG), tyrosine 410, and 419-422 (GGAS). NADP(+) is bound by residues 519–520 (SR), 525–529 (KVYVQ), and aspartate 561. Tyrosine 599 contacts FAD.

It belongs to the NADPH-dependent sulphite reductase flavoprotein subunit CysJ family. In the N-terminal section; belongs to the flavodoxin family. The protein in the C-terminal section; belongs to the flavoprotein pyridine nucleotide cytochrome reductase family. As to quaternary structure, alpha(8)-beta(8). The alpha component is a flavoprotein, the beta component is a hemoprotein. Requires FAD as cofactor. FMN is required as a cofactor.

The enzyme catalyses hydrogen sulfide + 3 NADP(+) + 3 H2O = sulfite + 3 NADPH + 4 H(+). It functions in the pathway sulfur metabolism; hydrogen sulfide biosynthesis; hydrogen sulfide from sulfite (NADPH route): step 1/1. Functionally, component of the sulfite reductase complex that catalyzes the 6-electron reduction of sulfite to sulfide. This is one of several activities required for the biosynthesis of L-cysteine from sulfate. The flavoprotein component catalyzes the electron flow from NADPH -&gt; FAD -&gt; FMN to the hemoprotein component. The protein is Sulfite reductase [NADPH] flavoprotein alpha-component of Escherichia coli (strain ATCC 8739 / DSM 1576 / NBRC 3972 / NCIMB 8545 / WDCM 00012 / Crooks).